Reading from the N-terminus, the 154-residue chain is 3-hydroxyacyl-[acyl-carrier-protein] dehydratase FabZ (154 aa).

His-58 is an active-site residue.

This sequence belongs to the thioester dehydratase family. FabZ subfamily.

The protein resides in the cytoplasm. It catalyses the reaction a (3R)-hydroxyacyl-[ACP] = a (2E)-enoyl-[ACP] + H2O. In terms of biological role, involved in unsaturated fatty acids biosynthesis. Catalyzes the dehydration of short chain beta-hydroxyacyl-ACPs and long chain saturated and unsaturated beta-hydroxyacyl-ACPs. This is 3-hydroxyacyl-[acyl-carrier-protein] dehydratase FabZ from Protochlamydia amoebophila (strain UWE25).